A 95-amino-acid polypeptide reads, in one-letter code: Protein GOLVEN 9 (95 aa).

Residues 1–24 (MKKTSLKLMTLVLGFCFVIYLLQG) form the signal peptide. Positions 25 to 73 (PRGGSRNGDLLIARKLISLEPIETKNAARSLKDSISTDLEEEVDRLMEH) are excised as a propeptide. Residues 72 to 95 (EHEYPSPVKPRKRTPVHNGVRNRH) form a disordered region. Y75 bears the Sulfotyrosine mark. Residues 80–95 (KPRKRTPVHNGVRNRH) are compositionally biased toward basic residues. Hydroxyproline is present on P86. Residues 90–95 (GVRNRH) constitute a propeptide that is removed on maturation.

The protein belongs to the RGF family. Binds to LRR receptor-like serine/threonine-protein kinases to trigger their dimerization with SERK proteins and subsequent signaling. Expressed in roots.

The protein resides in the secreted. Signaling peptide (root growth factor) required during root gravitropism in a PIN2-traffic dependent manner. Regulates the pattern of root growth and lateral root development by modulating the length and the number of cortical cells in the root apical meristem (RAM), and the anticlinal asymmetric cell divisions in lateral root initiation cells. The protein is Protein GOLVEN 9 of Arabidopsis thaliana (Mouse-ear cress).